Reading from the N-terminus, the 862-residue chain is Eukaryotic translation initiation factor 3 subunit C (862 aa).

The segment at 1 to 81 is disordered; the sequence is MSSRFFYGGG…EEEEKVTVVK (81 aa). Acidic residues predominate over residues 17–54; that stretch reads SSDEEELYSDREEEEKSEEEESSEEEDETSEEEESDEE. Residues 55 to 65 show a composition bias toward basic and acidic residues; sequence TGARKFLKDVA. Residues 66–75 are compositionally biased toward acidic residues; it reads SDSEEEEEEE. One can recognise a PCI domain in the interval 600–774; that stretch reads FHMHINLELL…NAIVFRKGVE (175 aa). Residues 813-862 are disordered; sequence RDQGAGARGGRGSGRGGQARGGPRFPGGQQGRRPGGQQFGGGALGGAIKA. Residues 818 to 862 show a composition bias toward gly residues; the sequence is GARGGRGSGRGGQARGGPRFPGGQQGRRPGGQQFGGGALGGAIKA.

It belongs to the eIF-3 subunit C family. As to quaternary structure, component of the eukaryotic translation initiation factor 3 (eIF-3) complex.

Its subcellular location is the cytoplasm. Functionally, component of the eukaryotic translation initiation factor 3 (eIF-3) complex, which is involved in protein synthesis of a specialized repertoire of mRNAs and, together with other initiation factors, stimulates binding of mRNA and methionyl-tRNAi to the 40S ribosome. The eIF-3 complex specifically targets and initiates translation of a subset of mRNAs involved in cell proliferation. The protein is Eukaryotic translation initiation factor 3 subunit C (nip1) of Aspergillus fumigatus (strain CBS 144.89 / FGSC A1163 / CEA10) (Neosartorya fumigata).